A 199-amino-acid chain; its full sequence is Protein-methionine-sulfoxide reductase heme-binding subunit MsrQ (199 aa).

The next 4 membrane-spanning stretches (helical) occupy residues 10–30 (WLKV…FWAI), 82–102 (LWCF…ELGI), 116–136 (PYLT…LTST), and 153–173 (VVYL…KILS).

This sequence belongs to the MsrQ family. Heterodimer of a catalytic subunit (MsrP) and a heme-binding subunit (MsrQ). The cofactor is FMN. Heme b is required as a cofactor.

Its subcellular location is the cell inner membrane. Part of the MsrPQ system that repairs oxidized periplasmic proteins containing methionine sulfoxide residues (Met-O), using respiratory chain electrons. Thus protects these proteins from oxidative-stress damage caused by reactive species of oxygen and chlorine generated by the host defense mechanisms. MsrPQ is essential for the maintenance of envelope integrity under bleach stress, rescuing a wide series of structurally unrelated periplasmic proteins from methionine oxidation, including the primary periplasmic chaperone SurA and the lipoprotein Pal. MsrQ provides electrons for reduction to the reductase catalytic subunit MsrP, using the quinone pool of the respiratory chain. The polypeptide is Protein-methionine-sulfoxide reductase heme-binding subunit MsrQ (Salmonella enteritidis PT4 (strain P125109)).